We begin with the raw amino-acid sequence, 301 residues long: Phosphatidylserine decarboxylase proenzyme (301 aa).

Active-site charge relay system; for autoendoproteolytic cleavage activity residues include Asp-115, His-171, and Ser-258. Ser-258 (schiff-base intermediate with substrate; via pyruvic acid; for decarboxylase activity) is an active-site residue. A Pyruvic acid (Ser); by autocatalysis modification is found at Ser-258.

Belongs to the phosphatidylserine decarboxylase family. PSD-B subfamily. Prokaryotic type II sub-subfamily. As to quaternary structure, heterodimer of a large membrane-associated beta subunit and a small pyruvoyl-containing alpha subunit. The cofactor is pyruvate. In terms of processing, is synthesized initially as an inactive proenzyme. Formation of the active enzyme involves a self-maturation process in which the active site pyruvoyl group is generated from an internal serine residue via an autocatalytic post-translational modification. Two non-identical subunits are generated from the proenzyme in this reaction, and the pyruvate is formed at the N-terminus of the alpha chain, which is derived from the carboxyl end of the proenzyme. The autoendoproteolytic cleavage occurs by a canonical serine protease mechanism, in which the side chain hydroxyl group of the serine supplies its oxygen atom to form the C-terminus of the beta chain, while the remainder of the serine residue undergoes an oxidative deamination to produce ammonia and the pyruvoyl prosthetic group on the alpha chain. During this reaction, the Ser that is part of the protease active site of the proenzyme becomes the pyruvoyl prosthetic group, which constitutes an essential element of the active site of the mature decarboxylase.

Its subcellular location is the cell membrane. The enzyme catalyses a 1,2-diacyl-sn-glycero-3-phospho-L-serine + H(+) = a 1,2-diacyl-sn-glycero-3-phosphoethanolamine + CO2. The protein operates within phospholipid metabolism; phosphatidylethanolamine biosynthesis; phosphatidylethanolamine from CDP-diacylglycerol: step 2/2. Catalyzes the formation of phosphatidylethanolamine (PtdEtn) from phosphatidylserine (PtdSer). This chain is Phosphatidylserine decarboxylase proenzyme, found in Chlamydia pneumoniae (Chlamydophila pneumoniae).